Reading from the N-terminus, the 157-residue chain is UPF0262 protein amb3341 (157 aa).

This sequence belongs to the UPF0262 family.

The polypeptide is UPF0262 protein amb3341 (Paramagnetospirillum magneticum (strain ATCC 700264 / AMB-1) (Magnetospirillum magneticum)).